A 651-amino-acid polypeptide reads, in one-letter code: Acetyl-coenzyme A synthetase (651 aa).

Residues 191–194 (RGGK), threonine 311, and asparagine 335 each bind CoA. ATP contacts are provided by residues 387 to 389 (GEP), 411 to 416 (DTWWQT), aspartate 500, and arginine 515. Serine 523 contacts CoA. Arginine 526 lines the ATP pocket. Mg(2+)-binding residues include valine 537, histidine 539, and valine 542. Arginine 584 contacts CoA. Lysine 609 bears the N6-acetyllysine mark.

It belongs to the ATP-dependent AMP-binding enzyme family. The cofactor is Mg(2+). In terms of processing, acetylated. Deacetylation by the SIR2-homolog deacetylase activates the enzyme.

The catalysed reaction is acetate + ATP + CoA = acetyl-CoA + AMP + diphosphate. Functionally, catalyzes the conversion of acetate into acetyl-CoA (AcCoA), an essential intermediate at the junction of anabolic and catabolic pathways. AcsA undergoes a two-step reaction. In the first half reaction, AcsA combines acetate with ATP to form acetyl-adenylate (AcAMP) intermediate. In the second half reaction, it can then transfer the acetyl group from AcAMP to the sulfhydryl group of CoA, forming the product AcCoA. In Pseudomonas syringae pv. syringae (strain B728a), this protein is Acetyl-coenzyme A synthetase.